The sequence spans 238 residues: Modulator of macroautophagy TMEM150B (238 aa).

Residues Met1–Leu8 are Cytoplasmic-facing. A helical transmembrane segment spans residues Pro9–Val29. N-linked (GlcNAc...) asparagine glycosylation is present at Asn30. The Extracellular portion of the chain corresponds to Asn30–Gln51. A helical transmembrane segment spans residues Ser52–Val72. Residues Arg73–Gln86 lie on the Cytoplasmic side of the membrane. The chain crosses the membrane as a helical span at residues Asn87–Phe107. The Extracellular portion of the chain corresponds to Gln108–His116. Residues Leu117–Leu137 traverse the membrane as a helical segment. Residues Ser138–Arg156 lie on the Cytoplasmic side of the membrane. A helical membrane pass occupies residues Leu157–His177. At Met178–Glu186 the chain is on the extracellular side. Residues Trp187–Leu207 form a helical membrane-spanning segment. Topologically, residues Arg208 to Leu238 are cytoplasmic.

Belongs to the DRAM/TMEM150 family.

The protein localises to the cell membrane. The protein resides in the endosome membrane. It is found in the cytoplasmic vesicle. It localises to the autophagosome membrane. Its function is as follows. Modulator of macroautophagy that causes accumulation of autophagosomes under basal conditions and enhances autophagic flux. Represses cell death and promotes long-term clonogenic survival of cells grown in the absence of glucose in a macroautophagy-independent manner. May have some role in extracellular matrix engulfment or growth factor receptor recycling, both of which can modulate cell survival. In Mus musculus (Mouse), this protein is Modulator of macroautophagy TMEM150B.